The primary structure comprises 93 residues: uncharacterized protein (93 aa).

The tract at residues 35 to 72 is disordered; sequence KSVPPPTPPKPVKKTPSPTLPKPSKQKQEPQVEVNEDR. Over residues 60 to 72 the composition is skewed to basic and acidic residues; sequence QKQEPQVEVNEDR.

This is an uncharacterized protein from Ostreid herpesvirus 1 (isolate France) (OsHV-1).